We begin with the raw amino-acid sequence, 299 residues long: MKNTVIRGTAASNQIRVFVANTTEMVAKAQELQMATPVAIAALGRTLTATSMMGLMSKSEKEKITVNINGGGPLGPIVVVGNSKGIVKGYVSHPHVEGSNLYPGKLDVGSAVGTDGTITVVKDLGLKEPYIGTYPLSTGEIAEDFAAYFAFSEQQPSGIALGVLVDVDYTIKAAGGYIIQVLPNIEEETLTKLESKLSTLEPITSIIDRIQDPEEILNHILGEFEPVILETYDVDFVCDCSEERLEQVLISIGEKELTEIIEEDKQAELVCHFCNKKYHFDEEHLNKLRSEILNKNNNI.

Intrachain disulfides connect Cys-238–Cys-240 and Cys-271–Cys-274.

This sequence belongs to the HSP33 family. In terms of processing, under oxidizing conditions two disulfide bonds are formed involving the reactive cysteines. Under reducing conditions zinc is bound to the reactive cysteines and the protein is inactive.

Its subcellular location is the cytoplasm. In terms of biological role, redox regulated molecular chaperone. Protects both thermally unfolding and oxidatively damaged proteins from irreversible aggregation. Plays an important role in the bacterial defense system toward oxidative stress. The sequence is that of 33 kDa chaperonin from Alkaliphilus oremlandii (strain OhILAs) (Clostridium oremlandii (strain OhILAs)).